The following is a 251-amino-acid chain: Pyridoxine 5'-phosphate synthase (251 aa).

Asn7 contacts 3-amino-2-oxopropyl phosphate. 9 to 10 (DH) is a binding site for 1-deoxy-D-xylulose 5-phosphate. Arg18 provides a ligand contact to 3-amino-2-oxopropyl phosphate. The active-site Proton acceptor is the His43. Positions 45 and 50 each coordinate 1-deoxy-D-xylulose 5-phosphate. Glu70 functions as the Proton acceptor in the catalytic mechanism. Position 100 (Thr100) interacts with 1-deoxy-D-xylulose 5-phosphate. His198 serves as the catalytic Proton donor. 3-amino-2-oxopropyl phosphate contacts are provided by residues Ala199 and 220–221 (GH).

This sequence belongs to the PNP synthase family. In terms of assembly, homooctamer; tetramer of dimers.

The protein resides in the cytoplasm. It catalyses the reaction 3-amino-2-oxopropyl phosphate + 1-deoxy-D-xylulose 5-phosphate = pyridoxine 5'-phosphate + phosphate + 2 H2O + H(+). It functions in the pathway cofactor biosynthesis; pyridoxine 5'-phosphate biosynthesis; pyridoxine 5'-phosphate from D-erythrose 4-phosphate: step 5/5. In terms of biological role, catalyzes the complicated ring closure reaction between the two acyclic compounds 1-deoxy-D-xylulose-5-phosphate (DXP) and 3-amino-2-oxopropyl phosphate (1-amino-acetone-3-phosphate or AAP) to form pyridoxine 5'-phosphate (PNP) and inorganic phosphate. This Aromatoleum aromaticum (strain DSM 19018 / LMG 30748 / EbN1) (Azoarcus sp. (strain EbN1)) protein is Pyridoxine 5'-phosphate synthase.